A 364-amino-acid polypeptide reads, in one-letter code: Ribosomal RNA large subunit methyltransferase F (364 aa).

The disordered stretch occupies residues 1–28 (MTNKRKSAKPLEPAKRTPKLRTKKSRDL).

It belongs to the methyltransferase superfamily. METTL16/RlmF family.

It localises to the cytoplasm. The catalysed reaction is adenosine(1618) in 23S rRNA + S-adenosyl-L-methionine = N(6)-methyladenosine(1618) in 23S rRNA + S-adenosyl-L-homocysteine + H(+). Its function is as follows. Specifically methylates the adenine in position 1618 of 23S rRNA. The protein is Ribosomal RNA large subunit methyltransferase F of Vibrio vulnificus (strain YJ016).